The primary structure comprises 96 residues: Transcription and mRNA export factor SUS1 (96 aa).

This sequence belongs to the ENY2 family. As to quaternary structure, component of the nuclear pore complex (NPC)-associated TREX-2 complex (transcription and export complex 2), composed of at least SUS1, SAC3, THP1, SEM1, and CDC31. TREX-2 contains 2 SUS1 chains. The TREX-2 complex interacts with the nucleoporin NUP1. Component of the 1.8 MDa SAGA transcription coactivator-HAT complex. SAGA is built of 5 distinct domains with specialized functions. Within the SAGA complex, SUS1, SGF11, SGF73 and UBP8 form an additional subcomplex of SAGA called the DUB module (deubiquitination module). Interacts directly with THP1, SAC3, SGF11, and with the RNA polymerase II.

It localises to the nucleus. Its subcellular location is the nucleoplasm. The protein resides in the cytoplasm. The protein localises to the P-body. In terms of biological role, involved in mRNA export coupled transcription activation by association with both the TREX-2 and the SAGA complexes. At the promoters, SAGA is required for recruitment of the basal transcription machinery. It influences RNA polymerase II transcriptional activity through different activities such as TBP interaction and promoter selectivity, interaction with transcription activators, and chromatin modification through histone acetylation and deubiquitination. Within the SAGA complex, participates in a subcomplex required for deubiquitination of H2B and for the maintenance of steady-state H3 methylation levels. The TREX-2 complex functions in docking export-competent ribonucleoprotein particles (mRNPs) to the nuclear entrance of the nuclear pore complex (nuclear basket). TREX-2 participates in mRNA export and accurate chromatin positioning in the nucleus by tethering genes to the nuclear periphery. May also be involved in cytoplasmic mRNA decay by interaction with components of P-bodies. The polypeptide is Transcription and mRNA export factor SUS1 (Kluyveromyces lactis (strain ATCC 8585 / CBS 2359 / DSM 70799 / NBRC 1267 / NRRL Y-1140 / WM37) (Yeast)).